Here is a 106-residue protein sequence, read N- to C-terminus: uncharacterized protein (106 aa).

It belongs to the SUI1 family.

This is an uncharacterized protein from Haemophilus influenzae (strain ATCC 51907 / DSM 11121 / KW20 / Rd).